We begin with the raw amino-acid sequence, 741 residues long: Subtilisin-like protease SBT4.4 (741 aa).

Positions 1 to 24 are cleaved as a signal peptide; it reads MAKGTTFIFLFSSLLVLSLSSVSA. The propeptide at 25–112 is activation peptide; it reads DKDDHGDQQV…VFPSRKLKLQ (88 aa). One can recognise an Inhibitor I9 domain in the interval 34-111; sequence VYIVYLGSLP…SVFPSRKLKL (78 aa). Positions 116-589 constitute a Peptidase S8 domain; that stretch reads SWNFMGLKEG…SGHVDPIDAI (474 aa). Asp-144 serves as the catalytic Charge relay system. Asn-175 and Asn-195 each carry an N-linked (GlcNAc...) asparagine glycan. His-204 (charge relay system) is an active-site residue. N-linked (GlcNAc...) asparagine glycans are attached at residues Asn-227 and Asn-357. One can recognise a PA domain in the interval 359-445; sequence TNYPLVYGKS…LSNDDYKSLV (87 aa). Residue Asn-449 is glycosylated (N-linked (GlcNAc...) asparagine). Catalysis depends on Ser-528, which acts as the Charge relay system. N-linked (GlcNAc...) asparagine glycosylation is found at Asn-565, Asn-610, Asn-623, and Asn-654.

Belongs to the peptidase S8 family. In terms of processing, the C-terminal propeptide is autocleaved.

The protein localises to the secreted. The polypeptide is Subtilisin-like protease SBT4.4 (Arabidopsis thaliana (Mouse-ear cress)).